Reading from the N-terminus, the 114-residue chain is MSDETALPLQFTEAAASKVKVLIADEENPDLKLRVYITGGGCSGFQYGFTFDDKVNDGDMTIEKQGVALVVDPMSLQYLVGGSVDYTEGLEGSRFVVTNPNAKTTCGCGSSFSV.

Positions 42, 106, and 108 each coordinate iron-sulfur cluster.

This sequence belongs to the HesB/IscA family. As to quaternary structure, homodimer. Iron-sulfur cluster is required as a cofactor.

Functionally, required for insertion of 4Fe-4S clusters for at least IspG. The chain is Iron-sulfur cluster insertion protein ErpA from Serratia proteamaculans (strain 568).